Here is a 427-residue protein sequence, read N- to C-terminus: Trigger factor (427 aa).

A PPIase FKBP-type domain is found at 163–248; sequence GDTVVIDFVG…IHEVKAKEVP (86 aa).

The protein belongs to the FKBP-type PPIase family. Tig subfamily.

It localises to the cytoplasm. The enzyme catalyses [protein]-peptidylproline (omega=180) = [protein]-peptidylproline (omega=0). Its function is as follows. Involved in protein export. Acts as a chaperone by maintaining the newly synthesized protein in an open conformation. Functions as a peptidyl-prolyl cis-trans isomerase. This chain is Trigger factor, found in Streptococcus mutans serotype c (strain ATCC 700610 / UA159).